A 52-amino-acid polypeptide reads, in one-letter code: Large ribosomal subunit protein bL32c (52 aa).

The protein belongs to the bacterial ribosomal protein bL32 family.

It localises to the plastid. Its subcellular location is the chloroplast. The polypeptide is Large ribosomal subunit protein bL32c (Citrus sinensis (Sweet orange)).